The sequence spans 418 residues: UDP-N-acetylglucosamine 1-carboxyvinyltransferase (418 aa).

Residue 22 to 23 (KN) coordinates phosphoenolpyruvate. R92 serves as a coordination point for UDP-N-acetyl-alpha-D-glucosamine. C116 serves as the catalytic Proton donor. Position 116 is a 2-(S-cysteinyl)pyruvic acid O-phosphothioketal (C116). UDP-N-acetyl-alpha-D-glucosamine is bound by residues 121 to 125 (RPIDL), D305, and L327.

Belongs to the EPSP synthase family. MurA subfamily.

It is found in the cytoplasm. The enzyme catalyses phosphoenolpyruvate + UDP-N-acetyl-alpha-D-glucosamine = UDP-N-acetyl-3-O-(1-carboxyvinyl)-alpha-D-glucosamine + phosphate. It functions in the pathway cell wall biogenesis; peptidoglycan biosynthesis. Cell wall formation. Adds enolpyruvyl to UDP-N-acetylglucosamine. This is UDP-N-acetylglucosamine 1-carboxyvinyltransferase from Campylobacter jejuni subsp. jejuni serotype O:23/36 (strain 81-176).